The sequence spans 338 residues: E3 ubiquitin-protein ligase SPL1 (338 aa).

The chain crosses the membrane as a helical span at residues 1 to 21 (MIHLAGFTCCLGGVALYLLTR). The Chloroplast intermembrane segment spans residues 22–223 (STGRDIKSIT…KLGDLSRRFK (202 aa)). A helical membrane pass occupies residues 224 to 246 (YASMGLTVLGVILISKPVIEYIL). Residues 247-338 (KRIEDTLERR…IQQVLKIYRH (92 aa)) are Cytoplasmic-facing. The RING-type zinc finger occupies 291 to 326 (CVVCLDQKYNTAFVECGHMCCCTPCSLQLRTCPLCR).

Its subcellular location is the plastid. It localises to the chloroplast outer membrane. The catalysed reaction is S-ubiquitinyl-[E2 ubiquitin-conjugating enzyme]-L-cysteine + [acceptor protein]-L-lysine = [E2 ubiquitin-conjugating enzyme]-L-cysteine + N(6)-ubiquitinyl-[acceptor protein]-L-lysine.. It functions in the pathway protein modification; protein ubiquitination. Possesses E3 ubiquitin-protein ligase activity. The sequence is that of E3 ubiquitin-protein ligase SPL1 from Arabidopsis thaliana (Mouse-ear cress).